Consider the following 347-residue polypeptide: UDP-N-acetylenolpyruvoylglucosamine reductase (347 aa).

Residues 27 to 197 (LPARAQRLAR…TGIELRLNKM (171 aa)) form the FAD-binding PCMH-type domain. Arginine 173 is a catalytic residue. The active-site Proton donor is the serine 247. The active site involves glutamate 342.

The protein belongs to the MurB family. FAD serves as cofactor.

It localises to the cytoplasm. It carries out the reaction UDP-N-acetyl-alpha-D-muramate + NADP(+) = UDP-N-acetyl-3-O-(1-carboxyvinyl)-alpha-D-glucosamine + NADPH + H(+). It participates in cell wall biogenesis; peptidoglycan biosynthesis. Cell wall formation. The chain is UDP-N-acetylenolpyruvoylglucosamine reductase from Alcanivorax borkumensis (strain ATCC 700651 / DSM 11573 / NCIMB 13689 / SK2).